The following is a 376-amino-acid chain: Cysteine proteinase 2 (376 aa).

The first 18 residues, 1–18 (MRLLVFLILLIFVNFSFA), serve as a signal peptide directing secretion. The propeptide at 19 to 122 (NVRPNGRRFS…EVLNVEDLQT (104 aa)) is activation peptide. Intrachain disulfides connect Cys144–Cys187, Cys178–Cys221, and Cys279–Cys365. Residue Cys147 is part of the active site. Catalysis depends on residues His286 and Asn343.

The protein belongs to the peptidase C1 family.

The protein localises to the lysosome. Functionally, cysteine proteinases 1 and 2 are believed to participate in the breakdown of protein during differentiation of Dictyostelium as a response to starvation. This is Cysteine proteinase 2 (cprB) from Dictyostelium discoideum (Social amoeba).